Reading from the N-terminus, the 623-residue chain is NAD-dependent malic enzyme 1, mitochondrial (623 aa).

The N-terminal 38 residues, 1-38, are a transit peptide targeting the mitochondrion; sequence MGIANKLRLSSSSLSRILHRRILYSSAVRSFTTSEGHR. The active-site Proton donor is tyrosine 143. An NAD(+)-binding site is contributed by arginine 196. The Proton acceptor role is filled by lysine 214. Residues glutamate 285, aspartate 286, and aspartate 309 each contribute to the a divalent metal cation site. Aspartate 309 and asparagine 464 together coordinate NAD(+).

Belongs to the malic enzymes family. Homodimer. Heterodimer of two related subunits in NAD-MEH complex. Interacts with NAD-ME2. The cofactor is Mg(2+). Requires Mn(2+) as cofactor. As to expression, expressed in leaves, stems, flowers, and roots (at protein level).

Its subcellular location is the mitochondrion. It carries out the reaction (S)-malate + NAD(+) = pyruvate + CO2 + NADH. Activated by oxaloacetate (OAA), 2-ketoglutarate, succinate and fumarate as homodimer and by OAA, 2-ketoglutarate, succinate, fumarate and coenzyme A (acetyl-CoA and CoA) as heterodimer NAD-MEH. Its function is as follows. Involved in the regulation of sugars and amino acids metabolisms during the night period. In Arabidopsis thaliana (Mouse-ear cress), this protein is NAD-dependent malic enzyme 1, mitochondrial (NAD-ME1).